Reading from the N-terminus, the 106-residue chain is UPF0642 protein YBL028C (106 aa).

Residues 1 to 12 (MAKSLRASSHLN) are compositionally biased toward polar residues. 2 disordered regions span residues 1 to 21 (MAKSLRASSHLNAKSVKRRGV) and 52 to 106 (KEEQ…FTRF). Residues 62-72 (DEKKSNEEAPR) are compositionally biased toward basic and acidic residues. Residues 83–106 (GRHHTYKKAKLMKQSKKKTSFTRF) are compositionally biased toward basic residues.

Belongs to the UPF0642 family.

The chain is UPF0642 protein YBL028C from Saccharomyces cerevisiae (strain ATCC 204508 / S288c) (Baker's yeast).